A 244-amino-acid chain; its full sequence is Complement C1q subcomponent subunit A (244 aa).

Residues 1–22 (MEAPRGWLVISVLAISLASSVT) form the signal peptide. A disordered region spans residues 28 to 94 (APDGTHGSAG…PGPSGPMGPA (67 aa)). One can recognise a Collagen-like domain in the interval 31-109 (GTHGSAGIPG…KGTKGSPGNI (79 aa)). 2 positions are modified to 4-hydroxyproline: Pro-39 and Pro-45. The residue at position 48 (Lys-48) is a 5-hydroxylysine. Lys-48 is a glycosylation site (O-linked (Gal...) hydroxylysine). Pro-54 and Pro-57 each carry 4-hydroxyproline. The residue at position 67 (Lys-67) is a 5-hydroxylysine. O-linked (Gal...) hydroxylysine glycosylation is present at Lys-67. 4-hydroxyproline is present on residues Pro-73, Pro-79, and Pro-85. Residues 79-94 (PGRMGYPGPSGPMGPA) are compositionally biased toward low complexity. Lys-100 is subject to 5-hydroxylysine. An O-linked (Gal...) hydroxylysine glycan is attached at Lys-100. The C1q domain occupies 110-244 (KDQPRPAFSA…FSGFLIFPSA (135 aa)). An N-linked (GlcNAc...) asparagine glycan is attached at Asn-146. Cys-172 and Cys-189 are disulfide-bonded. Residue Gln-198 coordinates Ca(2+).

Core component of the complement C1 complex, a calcium-dependent complex composed of 1 molecule of the C1Q subcomplex, 2 molecules of C1R and 2 molecules of C1S. The C1Q subcomplex is composed 18 subunits: 3 chains of C1QA, C1QB, and C1QC trimerize to form 6 collagen-like triple helices connected to six globular ligand-recognition modules (C1q domain). Interacts with CR1 (via Sushi 24 and Sushi 25 domains). Interacts (via C-terminus) with CD33; this interaction activates CD33 inhibitory motifs. Post-translationally, O-linked glycans are assumed to be the Glc-Gal disaccharides typically found as secondary modifications of hydroxylated lysines in collagen-like domains.

It is found in the secreted. The protein resides in the cell surface. Its activity is regulated as follows. The C1Q subcomplex is inhibited by sulfated molecules, such as triterpenoid sulfates, heparan sulfate, or chondroitin sulfates. In terms of biological role, core component of the complement C1 complex, a multiprotein complex that initiates the classical pathway of the complement system, a cascade of proteins that leads to phagocytosis and breakdown of pathogens and signaling that strengthens the adaptive immune system. The classical complement pathway is initiated by the C1Q subcomplex of the C1 complex, which specifically binds IgG or IgM immunoglobulins complexed with antigens, forming antigen-antibody complexes on the surface of pathogens: C1QA, together with C1QB and C1QC, specifically recognizes and binds the Fc regions of IgG or IgM via its C1q domain. Immunoglobulin-binding activates the proenzyme C1R, which cleaves C1S, initiating the proteolytic cascade of the complement system. The C1Q subcomplex is activated by a hexamer of IgG complexed with antigens, while it is activated by a pentameric IgM. The C1Q subcomplex also recognizes and binds phosphatidylserine exposed on the surface of cells undergoing programmed cell death, possibly promoting activation of the complement system. The polypeptide is Complement C1q subcomponent subunit A (C1QA) (Bos taurus (Bovine)).